We begin with the raw amino-acid sequence, 149 residues long: D-aminoacyl-tRNA deacylase (149 aa).

The short motif at 137–138 (GP) is the Gly-cisPro motif, important for rejection of L-amino acids element.

It belongs to the DTD family. Homodimer.

The protein resides in the cytoplasm. The catalysed reaction is glycyl-tRNA(Ala) + H2O = tRNA(Ala) + glycine + H(+). It carries out the reaction a D-aminoacyl-tRNA + H2O = a tRNA + a D-alpha-amino acid + H(+). Its function is as follows. An aminoacyl-tRNA editing enzyme that deacylates mischarged D-aminoacyl-tRNAs. Also deacylates mischarged glycyl-tRNA(Ala), protecting cells against glycine mischarging by AlaRS. Acts via tRNA-based rather than protein-based catalysis; rejects L-amino acids rather than detecting D-amino acids in the active site. By recycling D-aminoacyl-tRNA to D-amino acids and free tRNA molecules, this enzyme counteracts the toxicity associated with the formation of D-aminoacyl-tRNA entities in vivo and helps enforce protein L-homochirality. The protein is D-aminoacyl-tRNA deacylase of Thermosipho africanus (strain TCF52B).